A 269-amino-acid chain; its full sequence is Zinc transporter ZupT (269 aa).

Transmembrane regions (helical) follow at residues 11-31 (IALA…LLVL), 40-60 (LLAF…LSEI), 80-100 (YGTL…HFIP), 125-145 (ALLT…ATFF), 158-178 (AFAI…PVYF), 187-207 (FSAS…GYWL), 217-237 (FGWV…DELL), and 249-269 (TVYG…LFKW). The Fe(2+) site is built by Asn136 and Glu139. Positions 139 and 164 each coordinate Zn(2+). Residues Asn165, Glu168, and Glu197 each coordinate Fe(2+). Residue Glu168 participates in Zn(2+) binding.

It belongs to the ZIP transporter (TC 2.A.5) family. ZupT subfamily.

The protein resides in the cell inner membrane. The catalysed reaction is Zn(2+)(in) = Zn(2+)(out). In terms of biological role, mediates zinc uptake. May also transport other divalent cations. This is Zinc transporter ZupT from Stenotrophomonas maltophilia (strain R551-3).